Here is a 339-residue protein sequence, read N- to C-terminus: Neutrophil cytosol factor 4 (339 aa).

The 122-residue stretch at 19–140 (DVAVSANIAD…IFFYQSAYDA (122 aa)) folds into the PX domain. A 1,2-diacyl-sn-glycero-3-phospho-(1D-myo-inositol-3-phosphate)-binding positions include 58-60 (RYR) and 92-94 (KVY). Thr154 carries the post-translational modification Phosphothreonine. The 60-residue stretch at 170–229 (MEAPRAEALFDFTGNSKLELSFKAGDVIFLLSKINKDWLEGTSQGATGIFPGSFVKILKD) folds into the SH3 domain. Positions 237–329 (TNWLRCYFYE…FPWKLHVTQK (93 aa)) constitute a PB1 domain. Ser315 is subject to Phosphoserine.

Component of the phagocyte NADPH oxidase complex composed of an obligatory core heterodimer formed by the membrane proteins CYBA and CYBB and the cytosolic regulatory subunits NCF1/p47-phox, NCF2/p67-phox, NCF4/p40-phox and the small GTPase RAC1 or RAC2. Part of a cytosolic complex composed at least by NCF1, NCF2 and NCF4. Interacts with NCF2. Interacts with NCF1. The NCF2-NCF4 complex interacts with GBP7 (via GB1/RHD3-type G domain).

It localises to the cytoplasm. The protein resides in the cytosol. The protein localises to the endosome membrane. Its subcellular location is the membrane. Subunit of the phagocyte NADPH oxidase complex that mediates the transfer of electrons from cytosolic NADPH to O2 to produce the superoxide anion (O2(-)). In the activated complex, electrons are first transferred from NADPH to flavin adenine dinucleotide (FAD) and subsequently transferred via two heme molecules to molecular oxygen, producing superoxide through an outer-sphere reaction. Activation of the NADPH oxidase complex is initiated by the assembly of cytosolic subunits of the NADPH oxidase complex with the core NADPH oxidase complex to form a complex at the plasma membrane or phagosomal membrane. This activation process is initiated by phosphorylation dependent binding of the cytosolic NCF1/p47-phox subunit to the C-terminus of CYBA/p22-phox. This is Neutrophil cytosol factor 4 from Mus musculus (Mouse).